A 414-amino-acid chain; its full sequence is Phosphoglycerate kinase (414 aa).

Substrate is bound by residues 20–22, R37, 60–63, R117, and R164; these read DIN and HQSR. Residues E338 and 364-367 contribute to the ATP site; that span reads GGHL.

It belongs to the phosphoglycerate kinase family. As to quaternary structure, monomer.

It localises to the cytoplasm. It catalyses the reaction (2R)-3-phosphoglycerate + ATP = (2R)-3-phospho-glyceroyl phosphate + ADP. The protein operates within carbohydrate degradation; glycolysis; pyruvate from D-glyceraldehyde 3-phosphate: step 2/5. The chain is Phosphoglycerate kinase from Methanococcus maripaludis (strain DSM 14266 / JCM 13030 / NBRC 101832 / S2 / LL).